Reading from the N-terminus, the 1117-residue chain is Zinc finger E-box-binding homeobox 1 (1117 aa).

Disordered regions lie at residues 1-103 (MADG…QNHD) and 122-143 (APEE…NGTP). A compositionally biased stretch (low complexity) spans 15 to 30 (PRRNNVTNYNTVVEAN). Phosphoserine is present on residues Ser-31 and Ser-33. The C2H2-type 1 zinc-finger motif lies at 150 to 173 (LTCPYCDRGYKRFTSLKEHIKYRH). Residues Lys-166 and Lys-175 each participate in a glycyl lysine isopeptide (Lys-Gly) (interchain with G-Cter in SUMO2) cross-link. 2 consecutive C2H2-type zinc fingers follow at residues 180-202 (FSCS…MTSH) and 220-242 (FKCT…LRIH). The C2H2-type 4; atypical zinc finger occupies 248 to 272 (YECPNCKKRFSHSGSYSSHISSKKC). Residues 278–307 (VNGRPRSGLKTSQCSSPSLSTSPGSPTRPQ) are disordered. Lys-287 participates in a covalent cross-link: Glycyl lysine isopeptide (Lys-Gly) (interchain with G-Cter in SUMO2). Low complexity predominate over residues 288–304 (TSQCSSPSLSTSPGSPT). 2 positions are modified to phosphoserine: Ser-293 and Ser-302. Glycyl lysine isopeptide (Lys-Gly) (interchain with G-Cter in SUMO2) cross-links involve residues Lys-311 and Lys-315. A Glycyl lysine isopeptide (Lys-Gly) (interchain with G-Cter in SUMO); alternate cross-link involves residue Lys-327. Residue Lys-327 forms a Glycyl lysine isopeptide (Lys-Gly) (interchain with G-Cter in SUMO2); alternate linkage. Residues Lys-419, Lys-473, Lys-484, Lys-495, and Lys-528 each participate in a glycyl lysine isopeptide (Lys-Gly) (interchain with G-Cter in SUMO2) cross-link. 3 disordered regions span residues 476–501 (IPAP…TDKS), 528–566 (KHYD…SQPP), and 613–687 (GQIP…SPLN). The segment covering 484-501 (KSEKLPEDLTVKSETDKS) has biased composition (basic and acidic residues). The homeobox; atypical DNA-binding region spans 559 to 618 (DLSPSQPPLKNLLSLLKAYYALNAQPSTEELSKIADSVNLPLDGVKKWFEKMQAGQIPGQ). Residues Ser-657, Ser-664, Ser-671, and Ser-678 each carry the phosphoserine modification. The span at 673–687 (MNGSRSCTSSPSPLN) shows a compositional bias: polar residues. Thr-680 is modified (phosphothreonine). Ser-682 carries the phosphoserine modification. A Glycyl lysine isopeptide (Lys-Gly) (interchain with G-Cter in SUMO); alternate cross-link involves residue Lys-752. A Glycyl lysine isopeptide (Lys-Gly) (interchain with G-Cter in SUMO2); alternate cross-link involves residue Lys-752. Residues 834 to 876 (PPVKVIQPNGNQDERQDTSSEGVSTVEDQNDSDSTPPKKKTRK) form a disordered region. Residues 852 to 868 (SSEGVSTVEDQNDSDST) show a composition bias toward polar residues. C2H2-type zinc fingers lie at residues 882 to 904 (YACD…KYEH) and 910 to 932 (HECG…MRLH). A C2H2-type 7; atypical zinc finger spans residues 938–959 (YQCDKCGKRFSHSGSYSQHMNH). A disordered region spans residues 991 to 1117 (EHVGARASPS…QLSEEKTNEA (127 aa)). 3 stretches are compositionally biased toward acidic residues: residues 1013 to 1032 (EEDE…MEEL), 1042 to 1069 (QGEE…DEAE), and 1098 to 1109 (SEMESESESEQL).

The protein belongs to the delta-EF1/ZFH-1 C2H2-type zinc-finger family. In terms of assembly, interacts (via N-terminus) with SMARCA4/BRG1. Ubiquitinated, leading to degradation in a proteasome-dependent manner. Deubiquitinated by USP51, leading to stabilization. As to expression, expressed in the external germinal layer (EGL) and internal granular layer (IGL) of the cerebellum (at protein level).

The protein localises to the nucleus. Functionally, acts as a transcriptional repressor. Binds to E-box sequences in the immunoglobulin heavy chain enhancer as well as in the regulatory regions of many other tissue-specific genes. Represses E-cadherin promoter and induces an epithelial-mesenchymal transition (EMT) by recruiting SMARCA4/BRG1. Represses BCL6 transcription in the presence of the corepressor CTBP1. Positively regulates neuronal differentiation. Represses RCOR1 transcription activation during neurogenesis. Represses transcription by binding to the E box (5'-CANNTG-3'). In the absence of TGFB1, acts as a repressor of COL1A2 transcription via binding to the E-box in the upstream enhancer region. Promotes tumorigenicity by repressing stemness-inhibiting microRNAs. In Mus musculus (Mouse), this protein is Zinc finger E-box-binding homeobox 1.